A 26-amino-acid chain; its full sequence is Delta-conotoxin Am2766 (26 aa).

Disulfide bonds link cysteine 1–cysteine 16, cysteine 8–cysteine 20, and cysteine 15–cysteine 24. Residue glutamate 26 is modified to Glutamic acid 1-amide.

As to expression, expressed by the venom duct.

It localises to the secreted. Delta-conotoxins bind to site 6 of voltage-gated sodium channels (Nav) and inhibit the inactivation process. The sequence is that of Delta-conotoxin Am2766 from Conus amadis (Amadis cone).